A 491-amino-acid chain; its full sequence is mRNA cleavage and polyadenylation factor clp1 (491 aa).

2 residues coordinate ATP: Glu28 and Lys78. Residues 128–160 (RAAAAQAQQQHPTHHQQQQQGRGAGAGVARSKP) form a disordered region. A compositionally biased stretch (low complexity) spans 130-148 (AAAQAQQQHPTHHQQQQQG). 171–176 (GVGKTS) is an ATP binding site.

It belongs to the Clp1 family. Clp1 subfamily. In terms of assembly, component of a pre-mRNA cleavage factor complex. Interacts directly with PCF11.

It is found in the nucleus. In terms of biological role, required for endonucleolytic cleavage during polyadenylation-dependent pre-mRNA 3'-end formation. This chain is mRNA cleavage and polyadenylation factor clp1 (paa-7), found in Neurospora crassa (strain ATCC 24698 / 74-OR23-1A / CBS 708.71 / DSM 1257 / FGSC 987).